A 235-amino-acid polypeptide reads, in one-letter code: Protein GMH1 homolog (235 aa).

At 1–54 (MSRSFRNGFRLLKLSQMDFERAWWDMANLFRAPRRVYRSITLRKQNINRYGRED) the chain is on the cytoplasmic side. A helical membrane pass occupies residues 55-75 (FSFIVLFSCMIVISALLWALF). Residues 76–88 (YMNTPKGYVTTIT) are Lumenal-facing. Residues 89-109 (FMLFVDFGAVGVIMATMYYFI) form a helical membrane-spanning segment. At 110-140 (AKRFLMKSNDTILSSTDYQLEWNYCFDVHCN) the chain is on the cytoplasmic side. A helical membrane pass occupies residues 141–161 (SFFPSFVLLYVIQLFLLPVIT). Residues 162-175 (RDNFISLFMGNTLY) are Lumenal-facing. The chain crosses the membrane as a helical span at residues 176–196 (LVALCYYSYLTFIGYQILPFL). Topologically, residues 197 to 201 (KNTHA) are cytoplasmic. Residues 202–222 (LLLPIPMFFIMWALSLLGFNV) form a helical membrane-spanning segment. The Lumenal portion of the chain corresponds to 223-235 (PKHVVDVYFGKSA).

It belongs to the unc-50 family.

The protein localises to the endoplasmic reticulum membrane. In terms of biological role, has a role in meiosis. The protein is Protein GMH1 homolog (mug16) of Schizosaccharomyces pombe (strain 972 / ATCC 24843) (Fission yeast).